Reading from the N-terminus, the 367-residue chain is tRNA(Ile)-lysidine synthase (367 aa).

Residue 32–37 participates in ATP binding; the sequence is SGGSDS.

This sequence belongs to the tRNA(Ile)-lysidine synthase family.

It localises to the cytoplasm. The enzyme catalyses cytidine(34) in tRNA(Ile2) + L-lysine + ATP = lysidine(34) in tRNA(Ile2) + AMP + diphosphate + H(+). In terms of biological role, ligates lysine onto the cytidine present at position 34 of the AUA codon-specific tRNA(Ile) that contains the anticodon CAU, in an ATP-dependent manner. Cytidine is converted to lysidine, thus changing the amino acid specificity of the tRNA from methionine to isoleucine. In Hyphomonas neptunium (strain ATCC 15444), this protein is tRNA(Ile)-lysidine synthase.